Here is a 266-residue protein sequence, read N- to C-terminus: Signal peptidase I (266 aa).

Topologically, residues 1–20 (MQTDNTKSNTNKTAKQEWGS) are cytoplasmic. The helical transmembrane segment at 21-41 (FVFVICIALLIRILIMEPFTV) threads the bilayer. The Periplasmic segment spans residues 42-266 (PTGSMKATIL…IFRNLYNTDV (225 aa)). Catalysis depends on residues Ser45 and Lys108.

This sequence belongs to the peptidase S26 family.

Its subcellular location is the cell inner membrane. It carries out the reaction Cleavage of hydrophobic, N-terminal signal or leader sequences from secreted and periplasmic proteins.. This chain is Signal peptidase I (lepB), found in Rickettsia massiliae (strain Mtu5).